The primary structure comprises 369 residues: Probable L-tyrosine/L-aspartate decarboxylase (369 aa).

At Lys224 the chain carries N6-(pyridoxal phosphate)lysine.

The protein belongs to the group II decarboxylase family. MfnA subfamily. Requires pyridoxal 5'-phosphate as cofactor.

The catalysed reaction is L-tyrosine + H(+) = tyramine + CO2. It catalyses the reaction L-aspartate + H(+) = beta-alanine + CO2. It participates in cofactor biosynthesis; methanofuran biosynthesis. It functions in the pathway cofactor biosynthesis; coenzyme A biosynthesis. In terms of biological role, catalyzes the decarboxylation of L-tyrosine to produce tyramine for methanofuran biosynthesis. Can also catalyze the decarboxylation of L-aspartate to produce beta-alanine for coenzyme A (CoA) biosynthesis. This is Probable L-tyrosine/L-aspartate decarboxylase from Methanospirillum hungatei JF-1 (strain ATCC 27890 / DSM 864 / NBRC 100397 / JF-1).